The following is a 239-amino-acid chain: Protein TrbH (239 aa).

A helical transmembrane segment spans residues 208-228 (TVVSIICLLMWICLVYIHCGI).

The protein resides in the cell inner membrane. The protein is Protein TrbH (trbH) of Escherichia coli (strain K12).